Here is a 354-residue protein sequence, read N- to C-terminus: Uroporphyrinogen decarboxylase (354 aa).

Substrate is bound by residues arginine 27–arginine 31, aspartate 77, tyrosine 154, threonine 209, and histidine 327.

It belongs to the uroporphyrinogen decarboxylase family. Homodimer.

Its subcellular location is the cytoplasm. It carries out the reaction uroporphyrinogen III + 4 H(+) = coproporphyrinogen III + 4 CO2. Its pathway is porphyrin-containing compound metabolism; protoporphyrin-IX biosynthesis; coproporphyrinogen-III from 5-aminolevulinate: step 4/4. In terms of biological role, catalyzes the decarboxylation of four acetate groups of uroporphyrinogen-III to yield coproporphyrinogen-III. The sequence is that of Uroporphyrinogen decarboxylase from Escherichia coli O6:K15:H31 (strain 536 / UPEC).